A 316-amino-acid polypeptide reads, in one-letter code: MKWTEVNVKTTNEAVEAVSSIFDGLDAVGVKIENALDFENYRASNPAELMELKDIPHITEGAIVSAYYPDDTTNIDVILSQLRTKVNALVDFGLDIGEASITTVEVQDDNWATAWKKYYHPVRITRYLTVKPSWSDYQASFSDEKVISLDPGMAFGTGTHPTTRLCLQALEMTMRGGETLYDVGTGSGVLSIAAKHLGASDVEAFDVDDIAVAAAQENFDLNPIAKDIKVSANDLLKGINRPVDTIVANILSDILVPLIPQAKQLLNSNGYFILSGIIDDKLELVIDTLIANDFKIEEVLHYGEWRGVIATNRKDD.

Threonine 163, glycine 184, aspartate 206, and asparagine 249 together coordinate S-adenosyl-L-methionine.

This sequence belongs to the methyltransferase superfamily. PrmA family.

The protein localises to the cytoplasm. It catalyses the reaction L-lysyl-[protein] + 3 S-adenosyl-L-methionine = N(6),N(6),N(6)-trimethyl-L-lysyl-[protein] + 3 S-adenosyl-L-homocysteine + 3 H(+). Its function is as follows. Methylates ribosomal protein L11. The protein is Ribosomal protein L11 methyltransferase of Pediococcus pentosaceus (strain ATCC 25745 / CCUG 21536 / LMG 10740 / 183-1w).